Here is a 435-residue protein sequence, read N- to C-terminus: Serine--tRNA ligase (435 aa).

Position 237–239 (237–239) interacts with L-serine; sequence TAE. Position 268–270 (268–270) interacts with ATP; it reads RSE. Glutamate 291 serves as a coordination point for L-serine. Position 355-358 (355-358) interacts with ATP; it reads EISS. Serine 390 is an L-serine binding site.

The protein belongs to the class-II aminoacyl-tRNA synthetase family. Type-1 seryl-tRNA synthetase subfamily. In terms of assembly, homodimer. The tRNA molecule binds across the dimer.

The protein localises to the cytoplasm. The enzyme catalyses tRNA(Ser) + L-serine + ATP = L-seryl-tRNA(Ser) + AMP + diphosphate + H(+). The catalysed reaction is tRNA(Sec) + L-serine + ATP = L-seryl-tRNA(Sec) + AMP + diphosphate + H(+). It functions in the pathway aminoacyl-tRNA biosynthesis; selenocysteinyl-tRNA(Sec) biosynthesis; L-seryl-tRNA(Sec) from L-serine and tRNA(Sec): step 1/1. Its function is as follows. Catalyzes the attachment of serine to tRNA(Ser). Is also able to aminoacylate tRNA(Sec) with serine, to form the misacylated tRNA L-seryl-tRNA(Sec), which will be further converted into selenocysteinyl-tRNA(Sec). The protein is Serine--tRNA ligase of Lactobacillus delbrueckii subsp. bulgaricus (strain ATCC BAA-365 / Lb-18).